Reading from the N-terminus, the 262-residue chain is tRNA pseudouridine synthase A (262 aa).

Residue D54 is the Nucleophile of the active site. Y113 lines the substrate pocket.

This sequence belongs to the tRNA pseudouridine synthase TruA family. In terms of assembly, homodimer.

The enzyme catalyses uridine(38/39/40) in tRNA = pseudouridine(38/39/40) in tRNA. Formation of pseudouridine at positions 38, 39 and 40 in the anticodon stem and loop of transfer RNAs. The protein is tRNA pseudouridine synthase A of Lactobacillus delbrueckii subsp. bulgaricus (strain ATCC BAA-365 / Lb-18).